We begin with the raw amino-acid sequence, 343 residues long: Dihydroorotate dehydrogenase (quinone) (343 aa).

FMN contacts are provided by residues A65–K69 and T89. A substrate-binding site is contributed by K69. Residue N114–F118 participates in substrate binding. Positions 145 and 178 each coordinate FMN. N178 provides a ligand contact to substrate. The active-site Nucleophile is S181. Substrate is bound at residue N183. 2 residues coordinate FMN: K215 and T243. N244–T245 lines the substrate pocket. Residues G269, G298, and Y319–T320 each bind FMN.

This sequence belongs to the dihydroorotate dehydrogenase family. Type 2 subfamily. Monomer. FMN serves as cofactor.

The protein resides in the cell membrane. It carries out the reaction (S)-dihydroorotate + a quinone = orotate + a quinol. Its pathway is pyrimidine metabolism; UMP biosynthesis via de novo pathway; orotate from (S)-dihydroorotate (quinone route): step 1/1. Functionally, catalyzes the conversion of dihydroorotate to orotate with quinone as electron acceptor. This chain is Dihydroorotate dehydrogenase (quinone), found in Leifsonia xyli subsp. xyli (strain CTCB07).